Here is a 779-residue protein sequence, read N- to C-terminus: Guanyl-specific ribonuclease pgl-1 (779 aa).

The segment at 203–464 (KLLLEGVKEQ…KRIIDALEKS (262 aa)) is involved in dimerization. Histidine 453 functions as the Proton acceptor in the catalytic mechanism. Disordered stretches follow at residues 563–596 (HEPQ…PTKS), 611–661 (RDAL…GDAT), and 718–779 (GRGG…GGNF). A compositionally biased stretch (polar residues) spans 584-595 (SISTDGWDSPTK). A compositionally biased stretch (basic and acidic residues) spans 612–626 (DALKPDSVNSHRSEE). The interval 699–772 (GGGGGSYGGR…GGDRGGRGGY (74 aa)) is RNA-binding RGG-box.

In terms of assembly, homodimer. Interacts with pgl-2 and pgl-3; this association is not required for P-granule localization of either pgl-2 or pgl-3. Interacts with ife-1. Interacts with prmt-1; the interaction is direct. Interacts with nmad-1. Interacts with P granule components meg-1, meg-3 and meg-4. It depends on Does not require metal ions for catalytic activity. as a cofactor.

The protein resides in the cytoplasmic granule. The enzyme catalyses [RNA] containing guanosine + H2O = an [RNA fragment]-3'-guanosine-3'-phosphate + a 5'-hydroxy-ribonucleotide-3'-[RNA fragment].. Functionally, guanyl-specific endoribonuclease which cleaves the phosphodiester bond in single-stranded RNA between the 3'-guanylic residue and the 5'-OH residue of adjacent nucleotide, resulting in the formation of a corresponding 2',3'-cyclic phosphate intermediate. Essential role in male and female postembryonic germline development; maternally provided protein maintains a population of proliferating germ cells and zygotic expression is required for correct oogenesis. Together with the P-granule component pgl-3, is involved in the formation of P-granules. Together with pgl-3, probably recruits other granule components such as pos-1, mex-3 and glh-1 to P-granules. In addition, may act redundantly with pgl-3 to protect germ cells from excessive germline apoptosis during normal oogenesis and development of the two gonadal arms. This may in part be through regulating the localization of sir-2.1 which is involved in germ cell apoptosis. May protect somatic cells from excessive apoptosis during normal development. This chain is Guanyl-specific ribonuclease pgl-1, found in Caenorhabditis remanei (Caenorhabditis vulgaris).